The chain runs to 318 residues: Aspartate carbamoyltransferase catalytic subunit (318 aa).

Carbamoyl phosphate is bound by residues arginine 58 and threonine 59. Lysine 86 provides a ligand contact to L-aspartate. Residues arginine 108, histidine 141, and glutamine 144 each coordinate carbamoyl phosphate. Residues arginine 174 and arginine 226 each coordinate L-aspartate. Carbamoyl phosphate is bound by residues glycine 270 and proline 271.

Belongs to the aspartate/ornithine carbamoyltransferase superfamily. ATCase family. Heterododecamer (2C3:3R2) of six catalytic PyrB chains organized as two trimers (C3), and six regulatory PyrI chains organized as three dimers (R2).

It carries out the reaction carbamoyl phosphate + L-aspartate = N-carbamoyl-L-aspartate + phosphate + H(+). The protein operates within pyrimidine metabolism; UMP biosynthesis via de novo pathway; (S)-dihydroorotate from bicarbonate: step 2/3. Catalyzes the condensation of carbamoyl phosphate and aspartate to form carbamoyl aspartate and inorganic phosphate, the committed step in the de novo pyrimidine nucleotide biosynthesis pathway. The sequence is that of Aspartate carbamoyltransferase catalytic subunit from Lactobacillus delbrueckii subsp. bulgaricus (strain ATCC 11842 / DSM 20081 / BCRC 10696 / JCM 1002 / NBRC 13953 / NCIMB 11778 / NCTC 12712 / WDCM 00102 / Lb 14).